The sequence spans 175 residues: Peptide methionine sulfoxide reductase MsrA (175 aa).

The active site involves cysteine 10.

The protein belongs to the MsrA Met sulfoxide reductase family.

It catalyses the reaction L-methionyl-[protein] + [thioredoxin]-disulfide + H2O = L-methionyl-(S)-S-oxide-[protein] + [thioredoxin]-dithiol. It carries out the reaction [thioredoxin]-disulfide + L-methionine + H2O = L-methionine (S)-S-oxide + [thioredoxin]-dithiol. Functionally, has an important function as a repair enzyme for proteins that have been inactivated by oxidation. Catalyzes the reversible oxidation-reduction of methionine sulfoxide in proteins to methionine. The sequence is that of Peptide methionine sulfoxide reductase MsrA from Clavibacter michiganensis subsp. michiganensis (strain NCPPB 382).